A 715-amino-acid polypeptide reads, in one-letter code: ATP-dependent RecD2 DNA helicase (715 aa).

Residues 1–150 (MSAALPAEPF…STLHKMVSSW (150 aa)) are not required for helicase activity. Residues glutamine 343 and 363–367 (GTGKS) contribute to the ATP site. 2 DNA-binding regions span residues glycine 391 and 407-414 (TVHRLLGY). Glutamine 466 is an ATP binding site. Residue valine 470 is a DNA-binding region. Arginine 493 provides a ligand contact to ATP. 3 DNA-binding regions span residues 554–555 (RK), 596–604 (NDYNNEIFN), and 644–647 (TVHR). Residue arginine 679 participates in ATP binding.

This sequence belongs to the RecD family. RecD2 subfamily. Monomer; homodimers seem to be inactive.

It carries out the reaction Couples ATP hydrolysis with the unwinding of duplex DNA at the replication fork by translocating in the 5'-3' direction. This creates two antiparallel DNA single strands (ssDNA). The leading ssDNA polymer is the template for DNA polymerase III holoenzyme which synthesizes a continuous strand.. It catalyses the reaction ATP + H2O = ADP + phosphate + H(+). Functionally, DNA-dependent ATPase (ssDNA stimulates the ATPase better than dsDNA) and ATP-dependent 5'-3' DNA helicase. Plays a role in an antioxidant pathway. Involved in DNA damage repair and/or recombination. Appears to move along DNA in single base steps, powered by hydrolysis of 1 molecule of ATP. Has low processivity, unwinds about 15-20 base pairs/second. Short (20 bp) substrates with 5'-overhangs or forked ends are the best substrates, is much less efficient on 52 or 76 bp substrates with 5'-overhangs. The presence of single-stranded DNA-binding protein (SSB) increases unwinding 4-5 fold. Has no activity on blunt DNA or DNA with 3'-overhangs. Requires at least 10 bases of 5'-ssDNA for helicase activity. This Deinococcus radiodurans (strain ATCC 13939 / DSM 20539 / JCM 16871 / CCUG 27074 / LMG 4051 / NBRC 15346 / NCIMB 9279 / VKM B-1422 / R1) protein is ATP-dependent RecD2 DNA helicase.